A 258-amino-acid polypeptide reads, in one-letter code: Acyl-[acyl-carrier-protein]--UDP-N-acetylglucosamine O-acyltransferase (258 aa).

Belongs to the transferase hexapeptide repeat family. LpxA subfamily. As to quaternary structure, homotrimer.

The protein localises to the cytoplasm. The catalysed reaction is a (3R)-hydroxyacyl-[ACP] + UDP-N-acetyl-alpha-D-glucosamine = a UDP-3-O-[(3R)-3-hydroxyacyl]-N-acetyl-alpha-D-glucosamine + holo-[ACP]. The protein operates within glycolipid biosynthesis; lipid IV(A) biosynthesis; lipid IV(A) from (3R)-3-hydroxytetradecanoyl-[acyl-carrier-protein] and UDP-N-acetyl-alpha-D-glucosamine: step 1/6. In terms of biological role, involved in the biosynthesis of lipid A, a phosphorylated glycolipid that anchors the lipopolysaccharide to the outer membrane of the cell. This is Acyl-[acyl-carrier-protein]--UDP-N-acetylglucosamine O-acyltransferase from Neisseria meningitidis serogroup B (strain ATCC BAA-335 / MC58).